A 199-amino-acid polypeptide reads, in one-letter code: Phosphoheptose isomerase (199 aa).

The region spanning M36 to D198 is the SIS domain. N51–G53 is a binding site for substrate. Residues H60 and E64 each coordinate Zn(2+). Substrate is bound by residues E64, N93–D94, S119–S121, S124, and Q174. Zn(2+)-binding residues include Q174 and H182.

Belongs to the SIS family. GmhA subfamily. Homotetramer. Zn(2+) serves as cofactor.

It is found in the cytoplasm. It carries out the reaction 2 D-sedoheptulose 7-phosphate = D-glycero-alpha-D-manno-heptose 7-phosphate + D-glycero-beta-D-manno-heptose 7-phosphate. It participates in carbohydrate biosynthesis; D-glycero-D-manno-heptose 7-phosphate biosynthesis; D-glycero-alpha-D-manno-heptose 7-phosphate and D-glycero-beta-D-manno-heptose 7-phosphate from sedoheptulose 7-phosphate: step 1/1. Functionally, catalyzes the isomerization of sedoheptulose 7-phosphate in D-glycero-D-manno-heptose 7-phosphate. This is Phosphoheptose isomerase from Coxiella burnetii (strain RSA 331 / Henzerling II).